Reading from the N-terminus, the 407-residue chain is Putative F-box protein At2g16220 (407 aa).

An F-box domain is found at 1-45 (MNSHFLTNDLILEVLSRLPLKSVARFHCVSKRWASMFGSPYFKEL). The disordered stretch occupies residues 385 to 407 (PPSVQPEYDESDSESEEDREIII). Residues 391–407 (EYDESDSESEEDREIII) are compositionally biased toward acidic residues.

The chain is Putative F-box protein At2g16220 from Arabidopsis thaliana (Mouse-ear cress).